The following is a 460-amino-acid chain: Cysteine--tRNA ligase (460 aa).

Cys-28 serves as a coordination point for Zn(2+). Residues Val-30–His-40 carry the 'HIGH' region motif. Cys-209, His-234, and Glu-238 together coordinate Zn(2+). Residues Lys-266–Ser-270 carry the 'KMSKS' region motif. Position 269 (Lys-269) interacts with ATP.

It belongs to the class-I aminoacyl-tRNA synthetase family. Monomer. The cofactor is Zn(2+).

It localises to the cytoplasm. It catalyses the reaction tRNA(Cys) + L-cysteine + ATP = L-cysteinyl-tRNA(Cys) + AMP + diphosphate. The chain is Cysteine--tRNA ligase from Vibrio vulnificus (strain YJ016).